Reading from the N-terminus, the 140-residue chain is Nucleoside diphosphate kinase (140 aa).

The ATP site is built by Lys-9, Phe-57, Arg-85, Thr-91, Arg-102, and Asn-112. His-115 (pros-phosphohistidine intermediate) is an active-site residue.

It belongs to the NDK family. As to quaternary structure, homotetramer. It depends on Mg(2+) as a cofactor.

It is found in the cytoplasm. It catalyses the reaction a 2'-deoxyribonucleoside 5'-diphosphate + ATP = a 2'-deoxyribonucleoside 5'-triphosphate + ADP. It carries out the reaction a ribonucleoside 5'-diphosphate + ATP = a ribonucleoside 5'-triphosphate + ADP. Major role in the synthesis of nucleoside triphosphates other than ATP. The ATP gamma phosphate is transferred to the NDP beta phosphate via a ping-pong mechanism, using a phosphorylated active-site intermediate. This is Nucleoside diphosphate kinase from Chlorobium chlorochromatii (strain CaD3).